A 393-amino-acid chain; its full sequence is Protein TsgA (393 aa).

The next 12 membrane-spanning stretches (helical) occupy residues 11–31 (WISF…GMVM), 51–71 (FLNA…EIIP), 78–98 (FGFI…SLAL), 101–121 (AAMF…TFLI), 134–154 (LLFT…VAAF), 162–182 (WYWV…LTFG), 206–226 (IGVL…LGFI), 245–265 (ALVS…SFIL), 273–293 (ILTV…TGTQ), 298–318 (WFIL…ITLG), 332–352 (FILT…GPIV), and 361–381 (LLTA…LGFV).

It belongs to the major facilitator superfamily. TsgA family.

Its subcellular location is the cell inner membrane. This chain is Protein TsgA, found in Salmonella schwarzengrund (strain CVM19633).